A 109-amino-acid polypeptide reads, in one-letter code: A-type ATP synthase subunit F (109 aa).

The protein belongs to the V-ATPase F subunit family. In terms of assembly, has multiple subunits with at least A(3), B(3), C, D, E, F, H, I and proteolipid K(x).

Its subcellular location is the cell membrane. Its function is as follows. Component of the A-type ATP synthase that produces ATP from ADP in the presence of a proton gradient across the membrane. The polypeptide is A-type ATP synthase subunit F (Halorubrum lacusprofundi (strain ATCC 49239 / DSM 5036 / JCM 8891 / ACAM 34)).